The primary structure comprises 212 residues: Regulator of G-protein signaling 2 (212 aa).

Disordered stretches follow at residues 11–33 and 48–69; these read HDCG…REKM and FLQN…PQTF. The tract at residues 32 to 66 is necessary for membrane association; that stretch reads KMKRTLLKDWKTRLSYFLQNSSSPGKPKTGKKSKP. Positions 79-116 are necessary to inhibit protein synthesis; the sequence is LWAEAFDELLASKYGLAAFRAFLKSEFCEENIEFWLAC. The RGS domain maps to 83-199; the sequence is AFDELLASKY…LESEFYQDLC (117 aa).

In terms of assembly, interacts with GNAQ. Does not interact with GNAI1 and GNAI3. Interacts with EIF2B5. Interacts with PRKG1 (isoform alpha). Phosphorylated by protein kinase C. Phosphorylation by PRKG1 leads to activation of RGS2 activity.

It is found in the cell membrane. The protein localises to the cytoplasm. Its subcellular location is the nucleus. The protein resides in the nucleolus. Functionally, regulates G protein-coupled receptor signaling cascades. Inhibits signal transduction by increasing the GTPase activity of G protein alpha subunits, thereby driving them into their inactive GDP-bound form. It is involved in the negative regulation of the angiotensin-activated signaling pathway. Plays a role in the regulation of blood pressure in response to signaling via G protein-coupled receptors and GNAQ. Plays a role in regulating the constriction and relaxation of vascular smooth muscle. Binds EIF2B5 and blocks its activity, thereby inhibiting the translation of mRNA into protein. The chain is Regulator of G-protein signaling 2 (RGS2) from Sus scrofa (Pig).